The following is a 448-amino-acid chain: Velvet complex subunit 2 (448 aa).

Disordered regions lie at residues 1-153 (MNSA…SKIE) and 224-306 (EPGT…NGYG). A compositionally biased stretch (low complexity) spans 15 to 34 (PGPAYSSSAPPPIHTYQQHQ). Pro residues-rich tracts occupy residues 35-44 (HPPPPLPPPS) and 52-61 (PPLPPPPSAP). The segment covering 96–107 (APYQQSQPSQYP) has biased composition (low complexity). The segment covering 116–132 (VPPPSQHDEPPPPPSSG) has biased composition (pro residues). In terms of domain architecture, Velvet spans 155–431 (GSGWKYSLDV…ANQGIKIPIR (277 aa)). Positions 260-292 (QQSYGPAPSYPPSSSYGPPQQYYPRHSGYSAEP) are enriched in low complexity.

Belongs to the velvet family. VelB subfamily. In terms of assembly, component of the heterotrimeric velvet complex composed of LAE1, VE1 and VELB; VE1 acting as a bridging protein between LAE1 and VEL2. Interacts with VE1. Forms a heterodimeric complex with VOS1; the formation of the VELB-VOS1 complex is light-dependent.

It localises to the nucleus. The protein resides in the cytoplasm. Functionally, component of the velvet transcription factor complex that controls sexual/asexual developmental ratio in response to light, promoting sexual development in the darkness while stimulating asexual sporulation under illumination. The velvet complex acts as a global regulator for secondary metabolite gene expression. Component of the VELB-VOS1 heterodimeric complex that plays a dual role in activating genes associated with spore maturation and repressing certain development-associated genes. The VELB-VOS1 complex binds DNA through the DNA-binding domain of VOS1 that recognizes an 11-nucleotide consensus sequence 5'-CTGGCCGCGGC-3' consisting of two motifs in the promoters of key developmental regulatory genes. Controls the expression of the fumonisins gene cluster. Involved in cell wall integrity, cell surface hydrophobicity, hyphal polarity and conidiation pattern. Involved in oxidative stress resistance by positively regulating the transcription of the catalase-encoding gene CAT2. In Gibberella moniliformis (strain M3125 / FGSC 7600) (Maize ear and stalk rot fungus), this protein is Velvet complex subunit 2.